The chain runs to 167 residues: NAD(P)H-quinone oxidoreductase subunit I, chloroplastic (167 aa).

2 4Fe-4S ferredoxin-type domains span residues 55 to 84 and 95 to 124; these read GRIH…VDWK and LNYS…MTEE. [4Fe-4S] cluster contacts are provided by C64, C67, C70, C74, C104, C107, C110, and C114.

This sequence belongs to the complex I 23 kDa subunit family. In terms of assembly, NDH is composed of at least 16 different subunits, 5 of which are encoded in the nucleus. [4Fe-4S] cluster serves as cofactor.

It localises to the plastid. The protein localises to the chloroplast thylakoid membrane. It carries out the reaction a plastoquinone + NADH + (n+1) H(+)(in) = a plastoquinol + NAD(+) + n H(+)(out). The catalysed reaction is a plastoquinone + NADPH + (n+1) H(+)(in) = a plastoquinol + NADP(+) + n H(+)(out). NDH shuttles electrons from NAD(P)H:plastoquinone, via FMN and iron-sulfur (Fe-S) centers, to quinones in the photosynthetic chain and possibly in a chloroplast respiratory chain. The immediate electron acceptor for the enzyme in this species is believed to be plastoquinone. Couples the redox reaction to proton translocation, and thus conserves the redox energy in a proton gradient. This Atropa belladonna (Belladonna) protein is NAD(P)H-quinone oxidoreductase subunit I, chloroplastic.